Here is a 419-residue protein sequence, read N- to C-terminus: Acyl-coenzyme A thioesterase 1 (419 aa).

Active-site charge relay system residues include S232, D324, and H358. The residue at position 416 (S416) is a Phosphoserine.

It belongs to the C/M/P thioester hydrolase family. Monomer. As to expression, expressed in heart, kidney, brown adipose tissue, white adipose tissue, adrenal gland and muscle.

Its subcellular location is the cytoplasm. It is found in the cytosol. The catalysed reaction is hexadecanoyl-CoA + H2O = hexadecanoate + CoA + H(+). It carries out the reaction decanoyl-CoA + H2O = decanoate + CoA + H(+). The enzyme catalyses dodecanoyl-CoA + H2O = dodecanoate + CoA + H(+). It catalyses the reaction tetradecanoyl-CoA + H2O = tetradecanoate + CoA + H(+). The catalysed reaction is octadecanoyl-CoA + H2O = octadecanoate + CoA + H(+). It carries out the reaction eicosanoyl-CoA + H2O = eicosanoate + CoA + H(+). The enzyme catalyses (9Z)-octadecenoyl-CoA + H2O = (9Z)-octadecenoate + CoA + H(+). It catalyses the reaction (9Z)-hexadecenoyl-CoA + H2O = (9Z)-hexadecenoate + CoA + H(+). The catalysed reaction is (9E)-octadecenoyl-CoA + H2O = (9E)-octadecenoate + CoA + H(+). It functions in the pathway lipid metabolism; fatty acid metabolism. Catalyzes the hydrolysis of acyl-CoAs into free fatty acids and coenzyme A (CoASH), regulating their respective intracellular levels. More active towards saturated and unsaturated long chain fatty acyl-CoAs (C12-C20). The sequence is that of Acyl-coenzyme A thioesterase 1 (Acot1) from Mus musculus (Mouse).